The sequence spans 1642 residues: Cobra venom factor (1642 aa).

Residues 1 to 22 (MERMALYLVAALLIGFPGSSHG) form the signal peptide. Residues Asn153, Asn158, and Asn209 are each glycosylated (N-linked (GlcNAc...) asparagine). Positions 516, 539, 540, and 542 each coordinate Mg(2+). 12 cysteine pairs are disulfide-bonded: Cys544–Cys801, Cys609–Cys644, Cys677–Cys704, Cys678–Cys711, Cys691–Cys712, Cys857–Cys1492, Cys1340–Cys1468, Cys1368–Cys1437, Cys1485–Cys1490, Cys1497–Cys1569, Cys1516–Cys1640, and Cys1616–Cys1625. Positions 650–732 (RRRRSSVLLL…QRESELFLAR (83 aa)) are excised as a propeptide. The C3a-like domain stretch occupies residues 654-732 (SSVLLLDSNA…QRESELFLAR (79 aa)). In terms of domain architecture, Anaphylatoxin-like spans 677–712 (CCEDVMHENPMGYTCEKRAKYIQEGDACKAAFLECC). The segment at 736-747 (EDGFIADSDIIS) is factor B binding site. Residues 985 to 1263 (HLIITPSGCG…VMAFQALAEY (279 aa)) constitute a propeptide that is removed on maturation. A C3d-like domain region spans residues 985 to 1263 (HLIITPSGCG…VMAFQALAEY (279 aa)). Positions 993–996 (CGEQ) form a cross-link, isoglutamyl cysteine thioester (Cys-Gln). The factor H binding site stretch occupies residues 1190-1253 (VLMAASTGRD…GETYGQTQAT (64 aa)). Asn1346 carries an N-linked (GlcNAc...) asparagine glycan. Positions 1497–1640 (CSSLNHQERI…FSYTLTEFGC (144 aa)) constitute an NTR domain.

The protein belongs to the venom complement C3 homolog family. In terms of assembly, heterotrimer of alpha, beta and gamma chains; disulfide-linked. Is active with factor B in the presence of factor D. Post-translationally, first processed by the removal of 4 Arg residues by furin-type protease, forming two chains, alpha and gamma/beta precursor, linked by a disulfide bond. Probably, the cobrin cleaves the C3a-like domain and then the C3d-like domain, generating the mature cobra venom factor (CVF). This mature CVF is composed of three chains: alpha, gamma and beta. In terms of processing, contains 3 N-linked oligosaccharide chains, two in the alpha-chain and one in the beta-chain. Glycosylation is not required for the biological activity. However, it contributes to the immunogenicity of CVF. The carbohydrate content is 7.4. The major oligosaccharide is a symmetric fucosylated biantennary complex-type chain with an unusual alpha-galactosylated Le(x) structure at its non-reducing end. Expressed by the venom gland.

Its subcellular location is the secreted. Its function is as follows. Complement-activating protein in cobra venom. It is a structural and functional analog of complement component C3b, the activated form of C3. It binds factor B (CFB), which is subsequently cleaved by factor D (CFD) to form the bimolecular complex CVF/Bb. CVF/Bb is a C3/C5 convertase that cleaves both complement components C3 and C5. Structurally, it resembles the C3b degradation product C3c, which is not able to form a C3/C5 convertase. Unlike C3b/Bb, CVF/Bb is a stable complex and completely resistant to the actions of complement regulatory factors H (CFH) and I (CFI). Therefore, CVF continuously activates complement resulting in the depletion of complement activity. The protein is Cobra venom factor of Naja kaouthia (Monocled cobra).